The following is a 202-amino-acid chain: Small ribosomal subunit protein uS5 (202 aa).

One can recognise an S5 DRBM domain in the interval 46-109; that stretch reads LKSEVLSVGF…RRAKLNIVPV (64 aa).

Belongs to the universal ribosomal protein uS5 family. Part of the 30S ribosomal subunit. Contacts protein S4.

Functionally, with S4 and S12 plays an important role in translational accuracy. The protein is Small ribosomal subunit protein uS5 of Thermofilum pendens (strain DSM 2475 / Hrk 5).